Consider the following 316-residue polypeptide: 4-hydroxy-3-methylbut-2-enyl diphosphate reductase (316 aa).

C12 lines the [4Fe-4S] cluster pocket. (2E)-4-hydroxy-3-methylbut-2-enyl diphosphate is bound by residues H41 and H74. H41 and H74 together coordinate dimethylallyl diphosphate. 2 residues coordinate isopentenyl diphosphate: H41 and H74. C96 is a [4Fe-4S] cluster binding site. H124 serves as a coordination point for (2E)-4-hydroxy-3-methylbut-2-enyl diphosphate. H124 is a binding site for dimethylallyl diphosphate. H124 contributes to the isopentenyl diphosphate binding site. Residue E126 is the Proton donor of the active site. T167 provides a ligand contact to (2E)-4-hydroxy-3-methylbut-2-enyl diphosphate. C197 contacts [4Fe-4S] cluster. Residues S225, S226, N227, and S269 each contribute to the (2E)-4-hydroxy-3-methylbut-2-enyl diphosphate site. Dimethylallyl diphosphate is bound by residues S225, S226, N227, and S269. Isopentenyl diphosphate-binding residues include S225, S226, N227, and S269.

Belongs to the IspH family. In terms of assembly, homodimer. Requires [4Fe-4S] cluster as cofactor.

It carries out the reaction isopentenyl diphosphate + 2 oxidized [2Fe-2S]-[ferredoxin] + H2O = (2E)-4-hydroxy-3-methylbut-2-enyl diphosphate + 2 reduced [2Fe-2S]-[ferredoxin] + 2 H(+). It catalyses the reaction dimethylallyl diphosphate + 2 oxidized [2Fe-2S]-[ferredoxin] + H2O = (2E)-4-hydroxy-3-methylbut-2-enyl diphosphate + 2 reduced [2Fe-2S]-[ferredoxin] + 2 H(+). It functions in the pathway isoprenoid biosynthesis; dimethylallyl diphosphate biosynthesis; dimethylallyl diphosphate from (2E)-4-hydroxy-3-methylbutenyl diphosphate: step 1/1. Its pathway is isoprenoid biosynthesis; isopentenyl diphosphate biosynthesis via DXP pathway; isopentenyl diphosphate from 1-deoxy-D-xylulose 5-phosphate: step 6/6. Its function is as follows. Catalyzes the conversion of 1-hydroxy-2-methyl-2-(E)-butenyl 4-diphosphate (HMBPP) into a mixture of isopentenyl diphosphate (IPP) and dimethylallyl diphosphate (DMAPP). Acts in the terminal step of the DOXP/MEP pathway for isoprenoid precursor biosynthesis. The protein is 4-hydroxy-3-methylbut-2-enyl diphosphate reductase of Salmonella agona (strain SL483).